Consider the following 371-residue polypeptide: Trans-enoyl reductase calK (371 aa).

51–54 provides a ligand contact to NADP(+); the sequence is NDHK. 145-152 contributes to the substrate binding site; sequence WSTISLAF. NADP(+)-binding positions include 181-184, 204-207, Tyr222, and 269-270; these read GTAS, SNQS, and LE. Position 289-293 (289-293) interacts with substrate; the sequence is GFQVL. 359–360 provides a ligand contact to NADP(+); it reads VR.

It belongs to the zinc-containing alcohol dehydrogenase family. Monomer.

It participates in secondary metabolite biosynthesis. Functionally, trans-enoyl reductase; part of the gene cluster that mediates the biosynthesis of calbistrin A and related compounds. Calbistrin A is a secondary metabolite with an interesting structure that was recently found to have bioactivity against leukemia cells. It consists of two polyketides linked by an ester bond: a bicyclic decalin containing polyketide and a linear 12 carbon dioic acid structure. The polyketide synthase calA is probably responsible for forming the decalin moiety. Because calA lacks a designated enoylreductase (ER) domain, the required activity is provided by the trans-enoyl reductase calK. Following release from the PKS, calF then probably catalyzes the oxidation and the subsequent Diels Alder cycloisomerization that lead to the formation of the decalin moiety. The decalin polyketide backbone includes two C-methyl groups, at C7 and C11 in backbone, of which the C7 position is probably methylated by the methyltransferase domain of calA. A candidate for adding the methyl group at C11, if not done by CalA, is the cluster methyltransferase calH. Several additional tailoring enzymes within the cluster could be involved in the modification of the decalin polyketide product. Those include the 3 cytochrome P450 monooxygenases CalE, CalG and CalL, of which one might be responsible for the introduction of the extra hydroxyl group attached to the backbone of the decalin moiety, at position C9 in the backbone, that allows for attachment of the linear moiety. One tailoring enzyme activity that is expected to be involved in biosynthesis of calbistrin is an acyltransferase for connecting the two polyketide synthase products, and which could be performed by the cluster acyltransferase calJ. The enzyme responsible for the biosynthesis of the linear moiety, probably a second PKS, has not been identified yet. The protein is Trans-enoyl reductase calK of Penicillium decumbens.